Here is a 105-residue protein sequence, read N- to C-terminus: SAGA-associated factor 11 (105 aa).

The SGF11-type zinc finger occupies 76 to 97 (FRCPNCSRDLSANRFAAHLERC).

It belongs to the SGF11 family. In terms of assembly, component of the 1.8 MDa SAGA transcription coactivator-HAT complex. SAGA is built of 5 distinct domains with specialized functions. Within the SAGA complex, SUS1, SGF11, SGF73 and UBP8 form an additional subcomplex of SAGA called the DUB module (deubiquitination module). Interacts directly with SGF73, SUS1 and UBP8.

It is found in the nucleus. Functions as a component of the transcription regulatory histone acetylation (HAT) complex SAGA. At the promoters, SAGA is required for recruitment of the basal transcription machinery. It influences RNA polymerase II transcriptional activity through different activities such as TBP interaction and promoter selectivity, interaction with transcription activators, and chromatin modification through histone acetylation and deubiquitination. SAGA acetylates nucleosomal histone H3 to some extent (to form H3K9ac, H3K14ac, H3K18ac and H3K23ac). SAGA interacts with DNA via upstream activating sequences (UASs). Involved in transcriptional regulation of a subset of SAGA-regulated genes. Within the SAGA complex, participates in a subcomplex, that specifically deubiquitinates histones H2B. The sequence is that of SAGA-associated factor 11 from Eremothecium gossypii (strain ATCC 10895 / CBS 109.51 / FGSC 9923 / NRRL Y-1056) (Yeast).